Here is a 409-residue protein sequence, read N- to C-terminus: NADH-quinone oxidoreductase subunit D (409 aa).

The protein belongs to the complex I 49 kDa subunit family. As to quaternary structure, NDH-1 is composed of 14 different subunits. Subunits NuoB, C, D, E, F, and G constitute the peripheral sector of the complex.

It localises to the cell inner membrane. The enzyme catalyses a quinone + NADH + 5 H(+)(in) = a quinol + NAD(+) + 4 H(+)(out). Functionally, NDH-1 shuttles electrons from NADH, via FMN and iron-sulfur (Fe-S) centers, to quinones in the respiratory chain. The immediate electron acceptor for the enzyme in this species is believed to be ubiquinone. Couples the redox reaction to proton translocation (for every two electrons transferred, four hydrogen ions are translocated across the cytoplasmic membrane), and thus conserves the redox energy in a proton gradient. The polypeptide is NADH-quinone oxidoreductase subunit D (nuoD) (Thermus thermophilus (strain ATCC BAA-163 / DSM 7039 / HB27)).